We begin with the raw amino-acid sequence, 248 residues long: MAGHSKWANIQHRKGKQDKLRSKMFSKLAKEITVAAKMGDPDPDKNPRLRLAVKAAKAVSMPKDVIERAIKKSQGGDAEDYSEIRYEGYGPNGIAIIVETMTDNVNRTASNVRSYFTKFGGNLGTTGSVSFMFDRVGEITYKPAAGDADTVMMAAIEAGADDVESDEDGHWIYCGDTSLNEVSEALEKVLGESEEAKLVWKPQNRTNVDLETAQKLMKLIDALEEDDDVQTVTANFDIPEDVAARLDA.

The interval 1 to 21 is disordered; sequence MAGHSKWANIQHRKGKQDKLR.

The protein belongs to the TACO1 family.

It is found in the cytoplasm. The polypeptide is Probable transcriptional regulatory protein Rsph17025_0577 (Cereibacter sphaeroides (strain ATCC 17025 / ATH 2.4.3) (Rhodobacter sphaeroides)).